Here is a 442-residue protein sequence, read N- to C-terminus: Glutamyl-tRNA reductase (442 aa).

Residues 49-52, Ser109, 114-116, and Gln120 contribute to the substrate site; these read TCNR and ESQ. Cys50 (nucleophile) is an active-site residue. 189 to 194 provides a ligand contact to NADP(+); that stretch reads GAGAMS.

The protein belongs to the glutamyl-tRNA reductase family. As to quaternary structure, homodimer.

It catalyses the reaction (S)-4-amino-5-oxopentanoate + tRNA(Glu) + NADP(+) = L-glutamyl-tRNA(Glu) + NADPH + H(+). It participates in porphyrin-containing compound metabolism; protoporphyrin-IX biosynthesis; 5-aminolevulinate from L-glutamyl-tRNA(Glu): step 1/2. Its function is as follows. Catalyzes the NADPH-dependent reduction of glutamyl-tRNA(Glu) to glutamate 1-semialdehyde (GSA). The sequence is that of Glutamyl-tRNA reductase from Kineococcus radiotolerans (strain ATCC BAA-149 / DSM 14245 / SRS30216).